A 1387-amino-acid polypeptide reads, in one-letter code: Dicer-like protein 2-1 (1387 aa).

Residues 26 to 205 enclose the Helicase ATP-binding domain; it reads MFEASLKENI…LLKIESNLDA (180 aa). Position 39-46 (39-46) interacts with ATP; it reads MGTGSGKT. The DEAH box motif lies at 146–149; the sequence is DEAH. One can recognise a Helicase C-terminal domain in the interval 370–535; it reads KFRSLLEFLD…AYEDDERRLR (166 aa). Residues 565–659 enclose the Dicer dsRNA-binding fold domain; that stretch reads AVAHLNHFCA…LPFKRNLELK (95 aa). 2 consecutive RNase III domains span residues 915 to 1055 and 1094 to 1277; these read ATRL…IDGG and DDHL…IDSH. Glu-1133, Asp-1263, and Glu-1266 together coordinate Mg(2+).

It belongs to the helicase family. Dicer subfamily. It depends on Mg(2+) as a cofactor. Requires Mn(2+) as cofactor.

In terms of biological role, dicer-like endonuclease involved in cleaving double-stranded RNA in the RNA interference (RNAi) pathway. Produces 21 to 25 bp dsRNAs (siRNAs) which target the selective destruction of homologous RNAs leading to sequence-specific suppression of gene expression, called post-transcriptional gene silencing (PTGS). Part of a broad host defense response against viral infection and transposons. The chain is Dicer-like protein 2-1 (dcl2-1) from Aspergillus niger (strain ATCC MYA-4892 / CBS 513.88 / FGSC A1513).